We begin with the raw amino-acid sequence, 490 residues long: Glutamate--tRNA ligase (490 aa).

Residues 13 to 23 (PSPTGTPHVGL) carry the 'HIGH' region motif. The short motif at 257–261 (KLSKR) is the 'KMSKS' region element. ATP is bound at residue K260.

This sequence belongs to the class-I aminoacyl-tRNA synthetase family. Glutamate--tRNA ligase type 1 subfamily. In terms of assembly, monomer.

The protein localises to the cytoplasm. It catalyses the reaction tRNA(Glu) + L-glutamate + ATP = L-glutamyl-tRNA(Glu) + AMP + diphosphate. In terms of biological role, catalyzes the attachment of glutamate to tRNA(Glu) in a two-step reaction: glutamate is first activated by ATP to form Glu-AMP and then transferred to the acceptor end of tRNA(Glu). The polypeptide is Glutamate--tRNA ligase (Mycobacterium tuberculosis (strain ATCC 25177 / H37Ra)).